A 138-amino-acid chain; its full sequence is MAYAQWVIIIIHNVGSQDVKIKNLKASWGKLHADGDKDAEVSASNYEGKIVKPDEKLQINACGRSDAAEGTTGTFDLVDPADGDKQVRHFYWDCPWGSKTNTWTVSGSNTKWMIEYSGQNLDSGALGTITVDTLKKGN.

Belongs to the aegerolysin family. In terms of assembly, monomer.

Functionally, has hemolytic activity against bovine erythrocytes at nanomolar concentrations in vitro. Promotes active pleurotolysin B (PlyB)-dependent permeabilization of membranes rich in cholesterol and sphingomyelin. May play an important role in the initial phase of fungal fruiting. The polypeptide is Ostreolysin A6 (OlyA6) (Pleurotus ostreatus (Oyster mushroom)).